A 550-amino-acid chain; its full sequence is Arginine--tRNA ligase (550 aa).

The short motif at 124-134 is the 'HIGH' region element; the sequence is ANPTGPLHVGH.

This sequence belongs to the class-I aminoacyl-tRNA synthetase family. Monomer.

The protein resides in the cytoplasm. It carries out the reaction tRNA(Arg) + L-arginine + ATP = L-arginyl-tRNA(Arg) + AMP + diphosphate. The sequence is that of Arginine--tRNA ligase from Desulfovibrio desulfuricans (strain ATCC 27774 / DSM 6949 / MB).